A 109-amino-acid chain; its full sequence is Large ribosomal subunit protein P2 (109 aa).

Positions Ala-63–Asp-109 are disordered. Residues Gly-68 to Ala-79 are compositionally biased toward gly residues. The span at Glu-91 to Met-103 shows a compositional bias: acidic residues. Ser-99 carries the post-translational modification Phosphoserine.

It belongs to the eukaryotic ribosomal protein P1/P2 family. In terms of assembly, P1 and P2 exist as dimers at the large ribosomal subunit.

Plays an important role in the elongation step of protein synthesis. The polypeptide is Large ribosomal subunit protein P2 (Fusarium culmorum).